The sequence spans 105 residues: Integration host factor subunit beta (105 aa).

Belongs to the bacterial histone-like protein family. As to quaternary structure, heterodimer of an alpha and a beta chain.

Functionally, this protein is one of the two subunits of integration host factor, a specific DNA-binding protein that functions in genetic recombination as well as in transcriptional and translational control. This is Integration host factor subunit beta from Nitrosomonas europaea (strain ATCC 19718 / CIP 103999 / KCTC 2705 / NBRC 14298).